The chain runs to 488 residues: Proline--tRNA ligase (488 aa).

It belongs to the class-II aminoacyl-tRNA synthetase family. ProS type 3 subfamily. In terms of assembly, homodimer.

Its subcellular location is the cytoplasm. The enzyme catalyses tRNA(Pro) + L-proline + ATP = L-prolyl-tRNA(Pro) + AMP + diphosphate. Catalyzes the attachment of proline to tRNA(Pro) in a two-step reaction: proline is first activated by ATP to form Pro-AMP and then transferred to the acceptor end of tRNA(Pro). This Borreliella burgdorferi (strain ZS7) (Borrelia burgdorferi) protein is Proline--tRNA ligase.